We begin with the raw amino-acid sequence, 472 residues long: Transmembrane protein 8B (472 aa).

The segment at 1–36 is disordered; that stretch reads MNMPQSLGNQPLPPEPPSLGTPAEGPGTTSPPEHCW. Topologically, residues 1-233 are extracellular; that stretch reads MNMPQSLGNQ…ADALTYGFQL (233 aa). Residues Asn-92 and Asn-100 are each glycosylated (N-linked (GlcNAc...) asparagine). Residues 182 to 221 enclose the EGF-like domain; it reads FLSPCVDDCGPYGQCKLLRTHNYLYAACECKAGWRGWGCT. 3 cysteine pairs are disulfide-bonded: Cys-186–Cys-196, Cys-190–Cys-209, and Cys-211–Cys-220. The chain crosses the membrane as a helical span at residues 234–254; it reads LSTLLLCLSNLMFLPPVVLAI. The Cytoplasmic segment spans residues 255–257; that stretch reads RSR. A helical transmembrane segment spans residues 258-277; sequence YVLEAAVYTFTMFFSTFYHA. The Extracellular portion of the chain corresponds to 278–292; that stretch reads CDQPGIVVFCIMDYD. A helical membrane pass occupies residues 293–313; that stretch reads VLQFCDFLGSLMSVWVTVIAM. The Cytoplasmic segment spans residues 314–315; it reads AR. The helical transmembrane segment at 316-336 threads the bilayer; it reads LQPVVKQVLYLLGAMLLSMAL. Residues 337 to 342 are Extracellular-facing; it reads QLDRHG. A helical membrane pass occupies residues 343-363; the sequence is LWNLLGPSLFALGILATAWTV. The Cytoplasmic portion of the chain corresponds to 364 to 379; it reads RSVRRRHCYPPTWRRW. Residues 380–400 form a helical membrane-spanning segment; sequence LFYLCPGSLIAGSAVLLYAFV. Over 401-405 the chain is Extracellular; the sequence is ETRDN. The helical transmembrane segment at 406–426 threads the bilayer; it reads YFYIHSIWHMLIAGSVGFLLP. The Cytoplasmic segment spans residues 427-472; the sequence is PRAKTDHGVPSGARARGCGYQLCINEQEELGLVGPGGATVSSICAS.

The protein belongs to the TMEM8 family. As to quaternary structure, isoform 2 (via its cytoplasmic part) interacts with EZR. In terms of processing, isoform 2 is N-glycosylated.

The protein resides in the cell membrane. It is found in the cytoplasm. Its subcellular location is the nucleus. It localises to the mitochondrion. The protein localises to the endoplasmic reticulum. May function as a regulator of the EGFR pathway. Probable tumor suppressor which may function in cell growth, proliferation and adhesion. The protein is Transmembrane protein 8B (TMEM8B) of Homo sapiens (Human).